Consider the following 124-residue polypeptide: MRHNNSGRRLGRTTSHRIAMFRNMVTSLLNHERIVTTDAKAKEIRSVAEKMITLGKRGDLHAHRQAAAYIREKSVVTKLFSTIAPRYKDRAGGYTRIIKLGQRLGDAASLSVIELVEEAAPQQS.

Belongs to the bacterial ribosomal protein bL17 family. As to quaternary structure, part of the 50S ribosomal subunit. Contacts protein L32.

The chain is Large ribosomal subunit protein bL17 from Trichlorobacter lovleyi (strain ATCC BAA-1151 / DSM 17278 / SZ) (Geobacter lovleyi).